The primary structure comprises 797 residues: Kinesin-like protein KIF18B (797 aa).

Residues 11–352 (TVAVVVRVRP…LKYANRAKEI (342 aa)) enclose the Kinesin motor domain. 110 to 117 (GATGAGKT) is an ATP binding site. Residues 367–402 (ISKYATICEQLKTEVADLQAKLRAYEDAARDAGKQI) are a coiled coil. Disordered stretches follow at residues 412–476 (EEAV…PNRL), 528–564 (AAVSPQPTDTSGAPPALRTQRGCDASPSTLSAEPSVP), 579–640 (LSSP…KEPQ), and 730–797 (KGSS…SGPR). Positions 594–608 (MSNTSRLETPHSLNT) are enriched in polar residues. Positions 731–744 (GSSIPKPSSISKGS) are enriched in low complexity.

It belongs to the TRAFAC class myosin-kinesin ATPase superfamily. Kinesin family.

It localises to the nucleus. It is found in the cytoplasm. Its subcellular location is the cytoskeleton. Functionally, may play an important role in microtubule plus-end depolymerizing activity in mitotic cells. This chain is Kinesin-like protein KIF18B (KIF18B), found in Gallus gallus (Chicken).